The sequence spans 166 residues: Protein-export protein SecB (166 aa).

This sequence belongs to the SecB family. In terms of assembly, homotetramer, a dimer of dimers. One homotetramer interacts with 1 SecA dimer.

It localises to the cytoplasm. Functionally, one of the proteins required for the normal export of preproteins out of the cell cytoplasm. It is a molecular chaperone that binds to a subset of precursor proteins, maintaining them in a translocation-competent state. It also specifically binds to its receptor SecA. The sequence is that of Protein-export protein SecB from Cereibacter sphaeroides (strain ATCC 17029 / ATH 2.4.9) (Rhodobacter sphaeroides).